A 728-amino-acid chain; its full sequence is Probable ubiquitin-conjugating enzyme protein 17 (728 aa).

Low complexity predominate over residues 1-17 (MSSQASQRSSSTSAVAQ). Disordered regions lie at residues 1–23 (MSSQASQRSSSTSAVAQKTRERR) and 123–155 (SSRSADEQKRRARRNSSASLSHKGTGYGTGSTR). The UBC core domain maps to 402 to 568 (DRTKRIAKEL…IEHATLNYAI (167 aa)). C495 functions as the Glycyl thioester intermediate in the catalytic mechanism. Disordered stretches follow at residues 649-678 (PFAKEEAEESERLKREQSEKEEKQKKEAAA) and 709-728 (RTQPTGDYSVPSVNEPSTSS). Residues 658–678 (SERLKREQSEKEEKQKKEAAA) show a composition bias toward basic and acidic residues. The segment covering 710–728 (TQPTGDYSVPSVNEPSTSS) has biased composition (polar residues).

Belongs to the ubiquitin-conjugating enzyme family.

The protein is Probable ubiquitin-conjugating enzyme protein 17 (ubc-17) of Caenorhabditis elegans.